Here is a 146-residue protein sequence, read N- to C-terminus: Ribonuclease H (146 aa).

Positions 4–145 (ELNKVVIYTD…ADILARSQIS (142 aa)) constitute an RNase H type-1 domain. 4 residues coordinate Mg(2+): Asp13, Glu51, Asp73, and Asp137.

The protein belongs to the RNase H family. Monomer. It depends on Mg(2+) as a cofactor.

The protein resides in the cytoplasm. The enzyme catalyses Endonucleolytic cleavage to 5'-phosphomonoester.. Functionally, endonuclease that specifically degrades the RNA of RNA-DNA hybrids. The protein is Ribonuclease H of Ehrlichia canis (strain Jake).